The sequence spans 196 residues: MEFIYPQASLIAGVDEVGRGPLVGAVVTAAVILDPLQPIVGLADSKKLSEKRREALYLEITEKALCWSLGRAEPAEIDQLNILHATMLAMQRAVANLPISPEYVLIDGNRCPKLPMPAQAVIKGDGLVAEISAASIVAKVTRDREMAELDQLFPEYGFAKHKGYPTAFHLEKLVQLGATEHHRKSFAPVKRAIGLK.

The 188-residue stretch at 9-196 (SLIAGVDEVG…APVKRAIGLK (188 aa)) folds into the RNase H type-2 domain. Residues Asp15, Glu16, and Asp107 each coordinate a divalent metal cation.

The protein belongs to the RNase HII family. Mn(2+) serves as cofactor. Requires Mg(2+) as cofactor.

Its subcellular location is the cytoplasm. It catalyses the reaction Endonucleolytic cleavage to 5'-phosphomonoester.. Endonuclease that specifically degrades the RNA of RNA-DNA hybrids. The polypeptide is Ribonuclease HII (Photorhabdus laumondii subsp. laumondii (strain DSM 15139 / CIP 105565 / TT01) (Photorhabdus luminescens subsp. laumondii)).